A 206-amino-acid polypeptide reads, in one-letter code: Large ribosomal subunit protein uL4 (206 aa).

Residues 46 to 89 form a disordered region; sequence GNRAQKTRAEVKHSTKKPWRQKGTGRARSGMTSSPLWRKGGRAF. Residues 59-70 are compositionally biased toward basic residues; that stretch reads STKKPWRQKGTG.

Belongs to the universal ribosomal protein uL4 family. Part of the 50S ribosomal subunit.

In terms of biological role, one of the primary rRNA binding proteins, this protein initially binds near the 5'-end of the 23S rRNA. It is important during the early stages of 50S assembly. It makes multiple contacts with different domains of the 23S rRNA in the assembled 50S subunit and ribosome. Functionally, forms part of the polypeptide exit tunnel. The chain is Large ribosomal subunit protein uL4 from Neisseria gonorrhoeae (strain NCCP11945).